We begin with the raw amino-acid sequence, 217 residues long: Probable GTP-binding protein EngB (217 aa).

Residues 27 to 201 (EGIEVAFAGR…REKLDTWFSE (175 aa)) form the EngB-type G domain. Residues 35 to 42 (GRSNAGKS), 62 to 66 (GRTQL), 80 to 83 (DLPG), 147 to 150 (TKAD), and 180 to 182 (FSS) contribute to the GTP site. The Mg(2+) site is built by S42 and T64.

It belongs to the TRAFAC class TrmE-Era-EngA-EngB-Septin-like GTPase superfamily. EngB GTPase family. Mg(2+) is required as a cofactor.

Necessary for normal cell division and for the maintenance of normal septation. This chain is Probable GTP-binding protein EngB, found in Yersinia enterocolitica serotype O:8 / biotype 1B (strain NCTC 13174 / 8081).